Consider the following 632-residue polypeptide: Mitoguardin 1 (632 aa).

A helical membrane pass occupies residues 70 to 90 (PVAKKLFVVTAVSAISVIFLA). A phosphoserine mark is found at S289 and S293.

It belongs to the mitoguardin family. In terms of assembly, homodimer and heterodimer; forms heterodimers with MIGA2. Interacts with PLD6/MitoPLD.

The protein resides in the mitochondrion outer membrane. In terms of biological role, regulator of mitochondrial fusion: acts by forming homo- and heterodimers at the mitochondrial outer membrane and facilitating the formation of PLD6/MitoPLD dimers. May act by regulating phospholipid metabolism via PLD6/MitoPLD. This chain is Mitoguardin 1, found in Homo sapiens (Human).